Reading from the N-terminus, the 288-residue chain is N-glycosylase/DNA lyase (288 aa).

Residues Q35, S62, and W73 each coordinate 8-oxoguanine. The tract at residues 134–203 (NPLVLVERPS…VACASISSEM (70 aa)) is helix-hairpin-helix. K160 functions as the Schiff-base intermediate with DNA in the catalytic mechanism. 2 residues coordinate 8-oxoguanine: F164 and P189. The active site involves D191. D238 and W242 together coordinate 8-oxoguanine.

It belongs to the archaeal N-glycosylase/DNA lyase (AGOG) family.

It carries out the reaction 2'-deoxyribonucleotide-(2'-deoxyribose 5'-phosphate)-2'-deoxyribonucleotide-DNA = a 3'-end 2'-deoxyribonucleotide-(2,3-dehydro-2,3-deoxyribose 5'-phosphate)-DNA + a 5'-end 5'-phospho-2'-deoxyribonucleoside-DNA + H(+). DNA repair enzyme that is part of the base excision repair (BER) pathway; protects from oxidative damage by removing the major product of DNA oxidation, 8-oxoguanine (GO), from single- and double-stranded DNA substrates. The protein is N-glycosylase/DNA lyase of Aeropyrum pernix (strain ATCC 700893 / DSM 11879 / JCM 9820 / NBRC 100138 / K1).